The sequence spans 95 residues: Small ribosomal subunit protein uS17 (95 aa).

Belongs to the universal ribosomal protein uS17 family. Part of the 30S ribosomal subunit.

In terms of biological role, one of the primary rRNA binding proteins, it binds specifically to the 5'-end of 16S ribosomal RNA. In Mycoplasmopsis synoviae (strain 53) (Mycoplasma synoviae), this protein is Small ribosomal subunit protein uS17.